A 1184-amino-acid polypeptide reads, in one-letter code: DNA-directed RNA polymerase subunit beta (1184 aa).

A disordered region spans residues 1160–1184 (DDDFTNQNDAFNIVQPENAAAEKTE).

Belongs to the RNA polymerase beta chain family. As to quaternary structure, the RNAP catalytic core consists of 2 alpha, 1 beta, 1 beta' and 1 omega subunit. When a sigma factor is associated with the core the holoenzyme is formed, which can initiate transcription.

The catalysed reaction is RNA(n) + a ribonucleoside 5'-triphosphate = RNA(n+1) + diphosphate. In terms of biological role, DNA-dependent RNA polymerase catalyzes the transcription of DNA into RNA using the four ribonucleoside triphosphates as substrates. The sequence is that of DNA-directed RNA polymerase subunit beta from Listeria welshimeri serovar 6b (strain ATCC 35897 / DSM 20650 / CCUG 15529 / CIP 8149 / NCTC 11857 / SLCC 5334 / V8).